Reading from the N-terminus, the 206-residue chain is Small ribosomal subunit protein uS4 (206 aa).

The S4 RNA-binding domain maps to 96–157; sequence SRLDNVVYRM…KAQKQLRVQA (62 aa).

This sequence belongs to the universal ribosomal protein uS4 family. As to quaternary structure, part of the 30S ribosomal subunit. Contacts protein S5. The interaction surface between S4 and S5 is involved in control of translational fidelity.

Its function is as follows. One of the primary rRNA binding proteins, it binds directly to 16S rRNA where it nucleates assembly of the body of the 30S subunit. Functionally, with S5 and S12 plays an important role in translational accuracy. This is Small ribosomal subunit protein uS4 from Alkalilimnicola ehrlichii (strain ATCC BAA-1101 / DSM 17681 / MLHE-1).